We begin with the raw amino-acid sequence, 1382 residues long: Suppressor of organelle fusion 2 (1382 aa).

Residues 229–463 form the BEACH domain; it reads RIPLDEATSN…QLFNRPHPIR (235 aa). WD repeat units lie at residues 1094–1133 and 1140–1176; these read GHQE…DEIG and KHTR…LLAQ.

Belongs to the WD repeat WDR81 family. In terms of assembly, interacts with sorf-1; the interaction is direct. Interacts with bec-1.

It is found in the early endosome. The protein resides in the late endosome. Its subcellular location is the cytoplasm. Together with sorf-1 negatively regulates the levels of phosphatidylinositol 3-phosphate (PtdIns3P) to enable the conversion of early endosomes to late endosomes. Binds to sorf-1 and the sorf-1-sorf-2 complex likely acts through bec-1, a non-catalytic subunit of phosphatidylinositol 3-kinase (PI3K), to suppress PI3K activity, thereby negatively regulating endosomal PtdIns3P levels. The sequence is that of Suppressor of organelle fusion 2 from Caenorhabditis elegans.